The chain runs to 504 residues: Glycerol kinase (504 aa).

Thr-12 contacts ADP. The ATP site is built by Thr-12, Thr-13, and Ser-14. Thr-12 provides a ligand contact to sn-glycerol 3-phosphate. Arg-16 lines the ADP pocket. Positions 82, 83, 134, and 244 each coordinate sn-glycerol 3-phosphate. Residues Arg-82, Glu-83, Tyr-134, Asp-244, and Gln-245 each coordinate glycerol. The ADP site is built by Thr-266 and Gly-309. Positions 266, 309, 313, and 410 each coordinate ATP. ADP-binding residues include Gly-410 and Asn-414.

This sequence belongs to the FGGY kinase family. As to quaternary structure, homotetramer and homodimer (in equilibrium).

The enzyme catalyses glycerol + ATP = sn-glycerol 3-phosphate + ADP + H(+). It functions in the pathway polyol metabolism; glycerol degradation via glycerol kinase pathway; sn-glycerol 3-phosphate from glycerol: step 1/1. Its activity is regulated as follows. Activated by phosphorylation and inhibited by fructose 1,6-bisphosphate (FBP). Key enzyme in the regulation of glycerol uptake and metabolism. Catalyzes the phosphorylation of glycerol to yield sn-glycerol 3-phosphate. This is Glycerol kinase from Alkaliphilus oremlandii (strain OhILAs) (Clostridium oremlandii (strain OhILAs)).